Consider the following 779-residue polypeptide: Probable phosphoketolase 2 (779 aa).

This sequence belongs to the XFP family. It depends on thiamine diphosphate as a cofactor.

This Rhizobium meliloti (strain 1021) (Ensifer meliloti) protein is Probable phosphoketolase 2.